Consider the following 449-residue polypeptide: Phosphoglucosamine mutase (449 aa).

Catalysis depends on Ser101, which acts as the Phosphoserine intermediate. Positions 101, 243, 245, and 247 each coordinate Mg(2+). A Phosphoserine modification is found at Ser101.

This sequence belongs to the phosphohexose mutase family. Requires Mg(2+) as cofactor. In terms of processing, activated by phosphorylation.

The enzyme catalyses alpha-D-glucosamine 1-phosphate = D-glucosamine 6-phosphate. Its function is as follows. Catalyzes the conversion of glucosamine-6-phosphate to glucosamine-1-phosphate. The sequence is that of Phosphoglucosamine mutase from Syntrophus aciditrophicus (strain SB).